The following is a 414-amino-acid chain: Cytochrome P450 CYP105Q4 (414 aa).

The segment covering M1–T12 has biased composition (polar residues). The interval M1 to M21 is disordered. Heme contacts are provided by H108, Q302, R304, H361, and C363.

Belongs to the cytochrome P450 family. It depends on heme as a cofactor.

Its function is as follows. Can bind oleic-acid derivatives, amphotericin B like precursors and a variety of nitrogen ligand donors. This is Cytochrome P450 CYP105Q4 from Mycobacterium marinum (strain ATCC BAA-535 / M).